A 265-amino-acid chain; its full sequence is Arcelin-1 (265 aa).

Residues 1 to 21 (MASSNLLTLALFLVLLTHANS) form the signal peptide. N-linked (GlcNAc...) asparagine glycosylation is found at asparagine 33, asparagine 89, and asparagine 128. Cysteine 165 and cysteine 201 form a disulfide bridge.

It belongs to the leguminous lectin family. Homodimer.

Its function is as follows. Seed storage. This carbohydrate-binding lectin has toxic effects on an important bean bruchid pest, Z.subfasciatus. Antibiosis properties of legume lectins are proposed to be due to the lysis of epithelial cells of the intestine by binding to the carbohydrate moieties of these proteins. This Phaseolus vulgaris (Kidney bean) protein is Arcelin-1 (ARC1).